The following is a 186-amino-acid chain: Ribosome-recycling factor (186 aa).

It belongs to the RRF family.

It is found in the cytoplasm. Functionally, responsible for the release of ribosomes from messenger RNA at the termination of protein biosynthesis. May increase the efficiency of translation by recycling ribosomes from one round of translation to another. In Rickettsia conorii (strain ATCC VR-613 / Malish 7), this protein is Ribosome-recycling factor.